A 216-amino-acid polypeptide reads, in one-letter code: Protein Nef (216 aa).

Positions 1 to 32 (MGGKWSKHSVPGWSTVRERMRRAEPATDRVRQ) are disordered. Residue Gly2 is the site of N-myristoyl glycine; by host attachment. Ser6 is subject to Phosphoserine; by host. Positions 16–32 (VRERMRRAEPATDRVRQ) are enriched in basic and acidic residues. An acidic; interacts with host PACS1 and PACS2; stabilizes the interaction of NEF/MHC-I with host AP1M1; necessary for MHC-I internalization region spans residues 72–75 (EDEE). Residues 79–88 (PVRPQVPLRP) form an SH3-binding; interaction with Src family tyrosine kinases region. Positions 82–85 (PQVP) match the PxxP; stabilizes the interaction of NEF/MHC-I with host AP1M1; necessary for MHC-I internalization motif. Positions 118–134 (DILDLWIYHTQGYFPDW) are mediates dimerization, Nef-PTE1 interaction. Positions 158–190 (VDPEKVEEANEGENNCLLHPMSQHGMDDPEKEV) are binding to ATP6V1H. The Dileucine internalization motif; necessary for CD4 internalization motif lies at 174 to 175 (LL). The short motif at 184–185 (DD) is the Diacidic; necessary for CD4 internalization element.

The protein belongs to the lentivirus primate group Nef protein family. In terms of assembly, monomer; cytosolic form. Homodimer; membrane bound form. Interacts with Nef associated p21-activated kinase (PAK2); this interaction activates PAK2. Associates with the Nef-MHC-I-AP1 complex; this complex is required for MHC-I internalization. Interacts (via C-terminus) with host PI3-kinase. Interacts with host PACS1; this interaction seems to be weak. Interacts with host PACS2. Interacts with host LCK and MAPK3; these interactions inhibit the kinase activity of the latter. Interacts with host ATP6V1H; this interaction may play a role in CD4 endocytosis. Associates with the CD4-Nef-AP2 complex; this complex is required for CD4 internalization. Interacts with host AP2 subunit alpha and AP2 subunit sigma2. Interacts with TCR-zeta chain; this interaction up-regulates the Fas ligand (FasL) surface expression. Interacts with host HCK, LYN, and SRC; these interactions activate the Src family kinases. Interacts with MAP3K5; this interaction inhibits the Fas and TNFR-mediated death signals. Interacts with beta-COP and PTE1. Interacts with human RACK1; this increases Nef phosphorylation by PKC. Interacts with TP53; this interaction decreases the half-life of TP53, protecting the infected cell against p53-mediated apoptosis. The virion-associated Nef proteins are cleaved by the viral protease to release the soluble C-terminal core protein. Nef is probably cleaved concomitantly with viral structural proteins on maturation of virus particles. Post-translationally, myristoylated. In terms of processing, phosphorylated on serine residues, probably by host PKCdelta and theta.

The protein localises to the host cell membrane. It localises to the virion. Its subcellular location is the secreted. The protein resides in the host Golgi apparatus membrane. In terms of biological role, factor of infectivity and pathogenicity, required for optimal virus replication. Alters numerous pathways of T-lymphocyte function and down-regulates immunity surface molecules in order to evade host defense and increase viral infectivity. Alters the functionality of other immunity cells, like dendritic cells, monocytes/macrophages and NK cells. In infected CD4(+) T-lymphocytes, down-regulates the surface MHC-I, mature MHC-II, CD4, CD28, CCR5 and CXCR4 molecules. Mediates internalization and degradation of host CD4 through the interaction of with the cytoplasmic tail of CD4, the recruitment of AP-2 (clathrin adapter protein complex 2), internalization through clathrin coated pits, and subsequent transport to endosomes and lysosomes for degradation. Diverts host MHC-I molecules to the trans-Golgi network-associated endosomal compartments by an endocytic pathway to finally target them for degradation. MHC-I down-regulation may involve AP-1 (clathrin adapter protein complex 1) or possibly Src family kinase-ZAP70/Syk-PI3K cascade recruited by PACS2. In consequence infected cells are masked for immune recognition by cytotoxic T-lymphocytes. Decreasing the number of immune receptors also prevents reinfection by more HIV particles (superinfection). Down-regulates host SERINC3 and SERINC5 thereby excluding these proteins from the viral particles. Virion infectivity is drastically higher when SERINC3 or SERINC5 are excluded from the viral envelope, because these host antiviral proteins impair the membrane fusion event necessary for subsequent virion penetration. Functionally, bypasses host T-cell signaling by inducing a transcriptional program nearly identical to that of anti-CD3 cell activation. Interaction with TCR-zeta chain up-regulates the Fas ligand (FasL). Increasing surface FasL molecules and decreasing surface MHC-I molecules on infected CD4(+) cells send attacking cytotoxic CD8+ T-lymphocytes into apoptosis. Its function is as follows. Plays a role in optimizing the host cell environment for viral replication without causing cell death by apoptosis. Protects the infected cells from apoptosis in order to keep them alive until the next virus generation is ready to strike. Inhibits the Fas and TNFR-mediated death signals by blocking MAP3K5/ASK1. Decreases the half-life of TP53, protecting the infected cell against p53-mediated apoptosis. Inhibits the apoptotic signals regulated by the Bcl-2 family proteins through the formation of a Nef/PI3-kinase/PAK2 complex that leads to activation of PAK2 and induces phosphorylation of host BAD. In terms of biological role, extracellular Nef protein targets CD4(+) T-lymphocytes for apoptosis by interacting with CXCR4 surface receptors. In Homo sapiens (Human), this protein is Protein Nef.